Consider the following 589-residue polypeptide: UvrABC system protein C (589 aa).

The region spanning 13–90 (PNPGCYLFKN…IKTHTPKYNF (78 aa)) is the GIY-YIG domain. The region spanning 194–229 (KDILKKLHHLMQKASEKMFYEKAQEYRDIIDSIKQT) is the UVR domain.

The protein belongs to the UvrC family. In terms of assembly, interacts with UvrB in an incision complex.

It is found in the cytoplasm. In terms of biological role, the UvrABC repair system catalyzes the recognition and processing of DNA lesions. UvrC both incises the 5' and 3' sides of the lesion. The N-terminal half is responsible for the 3' incision and the C-terminal half is responsible for the 5' incision. The polypeptide is UvrABC system protein C (Aster yellows witches'-broom phytoplasma (strain AYWB)).